The following is a 112-amino-acid chain: Nitrogen regulatory protein P-II (112 aa).

The residue at position 51 (Y51) is an O-UMP-tyrosine.

The protein belongs to the P(II) protein family. Homotrimer.

Its function is as follows. In nitrogen-limiting conditions, when the ratio of Gln to 2-ketoglutarate decreases, P-II is uridylylated to P-II-UMP. P-II-UMP allows the deadenylation of glutamine synthetase (GS), thus activating the enzyme. Conversely, in nitrogen excess P-II is deuridylated and promotes the adenylation of GS. P-II indirectly controls the transcription of the GS gene (glnA). P-II prevents NR-II-catalyzed conversion of NR-I to NR-I-phosphate, the transcriptional activator of glnA. When P-II is uridylylated to P-II-UMP, these events are reversed. This is Nitrogen regulatory protein P-II (glnB) from Azospirillum brasilense.